A 362-amino-acid polypeptide reads, in one-letter code: MEIIKLDHITKQYDDGFVALKDINLELESGKFYSLLGPSGSGKTTILRIIAGFTEASAGKVYFDGQDITNLDASKRHINTVFQNYALFPHLNVYENVAFALKLRQRPESEIREKVKDALHTVRLDGYANREISELSGGQQQRVAIARAIINEPKVLLLDECLSALDKRLRKEMQFELRAIQKKLGITFIFVTHDQEEALAMSDEIFVLNDGEIKQSGSPVDIYDEPVNDFVARFIGDSNILSGRMIRDFAVEFAGKDFECADAGITPGEKVEVVLRPEDLDITAPAAGKLLVTVQSQLFLGDHFEIKAIGQDGFEWLIHSTNGVQIGQEVGIFFDPEDIHVMRLGETEEEFDARLETYEGED.

Residues 4–235 (IKLDHITKQY…PVNDFVARFI (232 aa)) enclose the ABC transporter domain. Residue 37-44 (GPSGSGKT) participates in ATP binding.

Belongs to the ABC transporter superfamily. Spermidine/putrescine importer (TC 3.A.1.11.1) family. In terms of assembly, the complex is composed of two ATP-binding proteins (PotA), two transmembrane proteins (PotB and PotC) and a solute-binding protein (PotD).

The protein localises to the cell membrane. The enzyme catalyses ATP + H2O + polyamine-[polyamine-binding protein]Side 1 = ADP + phosphate + polyamineSide 2 + [polyamine-binding protein]Side 1.. Part of the ABC transporter complex PotABCD involved in spermidine/putrescine import. Responsible for energy coupling to the transport system. This chain is Spermidine/putrescine import ATP-binding protein PotA, found in Lactobacillus delbrueckii subsp. bulgaricus (strain ATCC 11842 / DSM 20081 / BCRC 10696 / JCM 1002 / NBRC 13953 / NCIMB 11778 / NCTC 12712 / WDCM 00102 / Lb 14).